The primary structure comprises 117 residues: Ig heavy chain V region MOPC 173 (117 aa).

In terms of domain architecture, Ig-like spans 1–116 (EVKLLESGGP…WGQGTSVTVS (116 aa)). C22 and C96 are joined by a disulfide.

In Mus musculus (Mouse), this protein is Ig heavy chain V region MOPC 173.